Consider the following 507-residue polypeptide: Flagellar hook-associated protein 1 (507 aa).

This sequence belongs to the flagella basal body rod proteins family.

The protein localises to the secreted. It localises to the bacterial flagellum. The polypeptide is Flagellar hook-associated protein 1 (flgK) (Bacillus subtilis (strain 168)).